The sequence spans 571 residues: Transcription factor ABORTED MICROSPORES (571 aa).

Residues 275 to 284 (NDKDMNENGR) are compositionally biased toward basic and acidic residues. Disordered regions lie at residues 275-321 (NDKD…AERR), 365-390 (ELQDELEENSETEDGSNRPQGGMSLN), and 536-571 (DDHQHHNGHHHPFDHQMNQSAHHHHHHQHINHYHNQ). The bHLH domain occupies 310–359 (GSQAKNLMAERRRRKKLNDRLYALRSLVPRITKLDRASILGDAINYVKEL). Over residues 368-378 (DELEENSETED) the composition is skewed to acidic residues. Positions 381-390 (NRPQGGMSLN) are enriched in polar residues. A compositionally biased stretch (basic residues) spans 556-571 (AHHHHHHQHINHYHNQ).

Homodimer. Interacts with ASHR3. Mostly expressed in closed, post-meiotic buds, and, to a lower extent, in pre-meiotic buds. Detected in leaves, stems, and flowers.

Its subcellular location is the nucleus. Functionally, transcription factor. Plays a crucial role in tapetum development. Required for male fertility and pollen differentiation, especially during the post-meiotic transcriptional regulation of microspore development within the developing anther. Binds E-box regions in the AHL16/TEK promoter. The protein is Transcription factor ABORTED MICROSPORES (AMS) of Arabidopsis thaliana (Mouse-ear cress).